An 804-amino-acid chain; its full sequence is Enhancer of polycomb homolog 2 (804 aa).

Disordered regions lie at residues 372–395, 484–508, 603–624, and 646–669; these read QSSDDDEFPQVPSPLSELEEENDP, GFSSSSHIAQPPSSPSRTNASDRHC, QSQQSLQQSHPKAQGSGSSDCM, and PVRSEVNKDQNAGHSNLNGVVQPS. 2 stretches are compositionally biased toward polar residues: residues 611 to 624 and 654 to 669; these read SHPKAQGSGSSDCM and DQNAGHSNLNGVVQPS.

Belongs to the enhancer of polycomb family.

It is found in the nucleus. Functionally, may play a role in transcription or DNA repair. The protein is Enhancer of polycomb homolog 2 (epc2) of Xenopus laevis (African clawed frog).